Consider the following 95-residue polypeptide: MKKYEIMYIIRPNMEEEAQKALVERFANVLTNNGAEIINTKEWGKRRLAYEINDLRDGFYMILNVNSNPEAVKEFDRLAKINEDIIRHIVVKEEE.

This sequence belongs to the bacterial ribosomal protein bS6 family.

Binds together with bS18 to 16S ribosomal RNA. This is Small ribosomal subunit protein bS6 from Bacillus cytotoxicus (strain DSM 22905 / CIP 110041 / 391-98 / NVH 391-98).